Reading from the N-terminus, the 471-residue chain is GTPase Der (471 aa).

2 EngA-type G domains span residues 3–168 (PIVA…PDLS) and 178–353 (VRVA…ANHA). Residues 9–16 (GRPNVGKS), 56–60 (DTGGI), 120–123 (NKVE), 184–191 (GRPNVGKS), 231–235 (DTAGM), and 296–299 (NKWD) contribute to the GTP site. The 85-residue stretch at 354–438 (RRISTRELND…PINLYFRTRE (85 aa)) folds into the KH-like domain.

Belongs to the TRAFAC class TrmE-Era-EngA-EngB-Septin-like GTPase superfamily. EngA (Der) GTPase family. In terms of assembly, associates with the 50S ribosomal subunit.

In terms of biological role, GTPase that plays an essential role in the late steps of ribosome biogenesis. The chain is GTPase Der from Symbiobacterium thermophilum (strain DSM 24528 / JCM 14929 / IAM 14863 / T).